Consider the following 193-residue polypeptide: Peptidyl-tRNA hydrolase (193 aa).

Tyr17 lines the tRNA pocket. The active-site Proton acceptor is His22. TRNA is bound by residues Phe68, Asn70, and Asn115.

It belongs to the PTH family. Monomer.

The protein resides in the cytoplasm. The enzyme catalyses an N-acyl-L-alpha-aminoacyl-tRNA + H2O = an N-acyl-L-amino acid + a tRNA + H(+). In terms of biological role, hydrolyzes ribosome-free peptidyl-tRNAs (with 1 or more amino acids incorporated), which drop off the ribosome during protein synthesis, or as a result of ribosome stalling. Functionally, catalyzes the release of premature peptidyl moieties from peptidyl-tRNA molecules trapped in stalled 50S ribosomal subunits, and thus maintains levels of free tRNAs and 50S ribosomes. The polypeptide is Peptidyl-tRNA hydrolase (Alteromonas mediterranea (strain DSM 17117 / CIP 110805 / LMG 28347 / Deep ecotype)).